A 103-amino-acid chain; its full sequence is MGKLTILFLVAAALLSTQVMVQGDGAHERTEAEEPQHHGAKRQDGTGGYPVDDVDMMQRIFRTPLKRQWCQPGYAYNPVLGICTITLSRIEHPGNYDYRRGRQ.

The N-terminal stretch at 1 to 23 (MGKLTILFLVAAALLSTQVMVQG) is a signal peptide. The propeptide occupies 24-67 (DGAHERTEAEEPQHHGAKRQDGTGGYPVDDVDMMQRIFRTPLKR). Residues 25–44 (GAHERTEAEEPQHHGAKRQD) show a composition bias toward basic and acidic residues. The disordered stretch occupies residues 25 to 50 (GAHERTEAEEPQHHGAKRQDGTGGYP). At glutamine 68 the chain carries Pyrrolidone carboxylic acid. A disulfide bridge links cysteine 70 with cysteine 83. Residues 99-103 (RRGRQ) constitute a propeptide that is removed on maturation.

Belongs to the O2 superfamily. In terms of processing, pyrrolidone carboxylic acid at position 1 has no significant effect on the structure of contryphan-Vc1. Expressed by the venom gland.

The protein localises to the secreted. Functionally, unknown. Intracranial injection of the peptide into mice does not produce toxic effects. In addition, the peptide does not produce any observable changes to normal or depolarization-induced intracellular calcium levels in mouse dorsal root ganglion cells. This Conus victoriae (Queen Victoria cone) protein is O2 contryphan Vc1.